The chain runs to 173 residues: Ribosome maturation factor RimM (173 aa).

Positions 95 to 169 (PDEFYDHELE…TIVIDPPEGL (75 aa)) constitute a PRC barrel domain.

This sequence belongs to the RimM family. Binds ribosomal protein uS19.

The protein resides in the cytoplasm. An accessory protein needed during the final step in the assembly of 30S ribosomal subunit, possibly for assembly of the head region. Essential for efficient processing of 16S rRNA. May be needed both before and after RbfA during the maturation of 16S rRNA. It has affinity for free ribosomal 30S subunits but not for 70S ribosomes. The protein is Ribosome maturation factor RimM of Mycolicibacterium smegmatis (strain ATCC 700084 / mc(2)155) (Mycobacterium smegmatis).